The following is a 584-amino-acid chain: Transcriptional regulator STP2 (584 aa).

Composition is skewed to polar residues over residues 1 to 11 (MSVAITSNNNK) and 180 to 202 (AESNESNESLAKDSSTTPASISD). 2 disordered regions span residues 1–22 (MSVAITSNNNKQPQPQPQPHLK) and 161–214 (KMHP…STVS). Residues 203–214 (SPSHSETESTVS) are compositionally biased toward low complexity. The segment at 225 to 247 (FKCPSCDAEFRVRGYLTRHMKKH) adopts a C2H2-type zinc-finger fold. Disordered stretches follow at residues 381-496 (RQKK…PQQP) and 553-584 (QYQPGQQQQQQQQQQQQQQQRQHQQQQPSMYF). Positions 394–407 (SESSIQSQESESSI) are enriched in low complexity. A compositionally biased stretch (basic residues) spans 431 to 441 (QHQHQHHHHVQ). Over residues 442–480 (NQHQQHVNQQQSIATPASIYSSSASSTSSYESTHSPYTP) the composition is skewed to low complexity. Residues 481–496 (QSSRSPLSHMYNPQQP) show a composition bias toward polar residues.

Post-translationally, proteolytically cleaved: activated by the amino acid-induced proteolytic removal of an N-terminal inhibitory domain.

The protein resides in the cell membrane. It localises to the nucleus. Its function is as follows. Transcription factor involved in the regulation of gene expression in response to extracellular amino acid levels. Synthesized as latent cytoplasmic precursor, which, upon a signal initiated by the plasma membrane SPS amino acid sensor system (including CSY1 and CSH3), becomes proteolytically activated and relocates to the nucleus, where it induces the expression of SPS-sensor-regulated genes. Required for efficient alkalinization through the release of ammonia from the cells produced during the breakdown of amino acids, and subsequent switch to the hyphal form. The sequence is that of Transcriptional regulator STP2 (STP2) from Candida albicans (strain SC5314 / ATCC MYA-2876) (Yeast).